The chain runs to 208 residues: UPF0637 protein lp_2332 (208 aa).

Belongs to the UPF0637 family.

This chain is UPF0637 protein lp_2332, found in Lactiplantibacillus plantarum (strain ATCC BAA-793 / NCIMB 8826 / WCFS1) (Lactobacillus plantarum).